Consider the following 505-residue polypeptide: Maturase K (505 aa).

Belongs to the intron maturase 2 family. MatK subfamily.

The protein localises to the plastid. Its subcellular location is the chloroplast. In terms of biological role, usually encoded in the trnK tRNA gene intron. Probably assists in splicing its own and other chloroplast group II introns. The protein is Maturase K of Blitum bonus-henricus (Good King Henry).